The primary structure comprises 189 residues: uncharacterized protein (189 aa).

4 helical membrane passes run 20 to 40, 46 to 66, 100 to 120, and 126 to 146; these read FILG…YLTF, TIII…IILI, VLLF…SLNI, and FVLY…GDVI.

The protein to M.jannaschii MJ0795.1 and MJ1249.1.

The protein localises to the cell membrane. This is an uncharacterized protein from Methanocaldococcus jannaschii (strain ATCC 43067 / DSM 2661 / JAL-1 / JCM 10045 / NBRC 100440) (Methanococcus jannaschii).